The following is a 264-amino-acid chain: MSVATYQERAAKHPSPVASKLLNLMHEKKTNLCASLDVNTTEELLKLVDTLGPYICLLKTHIDIISDFSIDGTVKPLKELAKKHNFMIFEDRKFADIGNTVKLQYSSGVYRIAEWADITNAHGVTGAGIVTGLKQAAQETTNEPRGLLMLAELSSKGSLAHGEYTQGTVEIAKTDKDFVIGFIAQRDMGGREEGYDWLIMTPGVGLDDKGDALGQQYRTVDEVVSTGSDIIIVGRGLFAKGRDPRVEGERYRKAGWEAYEKRCQ.

Substrate contacts are provided by residues aspartate 37, lysine 59–histidine 61, aspartate 91–threonine 100, tyrosine 217, and arginine 235. Catalysis depends on lysine 93, which acts as the Proton donor.

It belongs to the OMP decarboxylase family.

It catalyses the reaction orotidine 5'-phosphate + H(+) = UMP + CO2. It participates in pyrimidine metabolism; UMP biosynthesis via de novo pathway; UMP from orotate: step 2/2. This is Orotidine 5'-phosphate decarboxylase (URA3) from Torulaspora delbrueckii (Yeast).